Reading from the N-terminus, the 104-residue chain is Large ribosomal subunit protein uL24 (104 aa).

The protein belongs to the universal ribosomal protein uL24 family. In terms of assembly, part of the 50S ribosomal subunit.

Its function is as follows. One of two assembly initiator proteins, it binds directly to the 5'-end of the 23S rRNA, where it nucleates assembly of the 50S subunit. One of the proteins that surrounds the polypeptide exit tunnel on the outside of the subunit. In Caulobacter sp. (strain K31), this protein is Large ribosomal subunit protein uL24.